Here is a 315-residue protein sequence, read N- to C-terminus: Protein ORANGE-LIKE, chloroplastic (315 aa).

Residues 1–16 (MTCFSSATPHRHHLLL) constitute a chloroplast transit peptide. The next 2 helical transmembrane spans lie at 155 to 175 (LYST…LIAP) and 207 to 227 (IVAS…LIEV). A CR-type zinc finger spans residues 225-307 (IEVNNVKQQE…CTGMVTASEH (83 aa)). Residues 238–245 (CKYCLGTG) form a CXXCXGXG motif repeat. A CXXCXXXG motif repeat occupies 249–256 (CARCSASG). Residues 282–289 (CLNCSGAG) form a CXXCXGXG motif repeat. Residues 293–300 (CPTCLCTG) form a CXXCXXXG motif repeat.

It belongs to the orange-like family. As to quaternary structure, interacts with PSY1.

The protein resides in the plastid. It is found in the chloroplast membrane. May be associated with accumulation of carotenoids in chromoplasts. The protein is Protein ORANGE-LIKE, chloroplastic (ORLIKE) of Arabidopsis thaliana (Mouse-ear cress).